The chain runs to 200 residues: Probable molybdenum cofactor guanylyltransferase (200 aa).

GTP contacts are provided by residues L9–G11, K21, D69, and D100. D100 serves as a coordination point for Mg(2+).

This sequence belongs to the MobA family. Requires Mg(2+) as cofactor.

Its subcellular location is the cytoplasm. It catalyses the reaction Mo-molybdopterin + GTP + H(+) = Mo-molybdopterin guanine dinucleotide + diphosphate. Transfers a GMP moiety from GTP to Mo-molybdopterin (Mo-MPT) cofactor (Moco or molybdenum cofactor) to form Mo-molybdopterin guanine dinucleotide (Mo-MGD) cofactor. This Bacillus anthracis (strain CDC 684 / NRRL 3495) protein is Probable molybdenum cofactor guanylyltransferase.